Reading from the N-terminus, the 436-residue chain is GTPase Der (436 aa).

EngA-type G domains follow at residues 4-167 (PTVA…PNEI) and 175-351 (IKFS…HAQN). GTP-binding positions include 10–17 (GRPNVGKS), 57–61 (DTGGI), 119–122 (NKVD), 181–188 (GRPNVGKS), 229–233 (DTAGM), and 294–297 (NKWD). A KH-like domain is found at 352-436 (LRISSSVLND…PIHLIARKRK (85 aa)).

Belongs to the TRAFAC class TrmE-Era-EngA-EngB-Septin-like GTPase superfamily. EngA (Der) GTPase family. Associates with the 50S ribosomal subunit.

GTPase that plays an essential role in the late steps of ribosome biogenesis. This is GTPase Der from Lactococcus lactis subsp. cremoris (strain SK11).